A 139-amino-acid polypeptide reads, in one-letter code: Putative pre-16S rRNA nuclease (139 aa).

The protein belongs to the YqgF nuclease family.

The protein resides in the cytoplasm. Could be a nuclease involved in processing of the 5'-end of pre-16S rRNA. This chain is Putative pre-16S rRNA nuclease, found in Photorhabdus laumondii subsp. laumondii (strain DSM 15139 / CIP 105565 / TT01) (Photorhabdus luminescens subsp. laumondii).